A 293-amino-acid chain; its full sequence is N-acetylneuraminate lyase (293 aa).

Positions 48 and 49 each coordinate aceneuramate. Tyr137 serves as the catalytic Proton donor. Residue Lys165 is the Schiff-base intermediate with substrate of the active site. The aceneuramate site is built by Thr167, Gly189, Asp191, Glu192, and Ser208.

It belongs to the DapA family. NanA subfamily. In terms of assembly, homotetramer.

It localises to the cytoplasm. The catalysed reaction is aceneuramate = aldehydo-N-acetyl-D-mannosamine + pyruvate. Its pathway is amino-sugar metabolism; N-acetylneuraminate degradation; D-fructose 6-phosphate from N-acetylneuraminate: step 1/5. Its function is as follows. Catalyzes the reversible aldol cleavage of N-acetylneuraminic acid (sialic acid; Neu5Ac) to form pyruvate and N-acetylmannosamine (ManNAc) via a Schiff base intermediate. This Staphylococcus aureus (strain bovine RF122 / ET3-1) protein is N-acetylneuraminate lyase.